Reading from the N-terminus, the 425-residue chain is Pre-mRNA-splicing factor RBM22 (425 aa).

The C3H1-type zinc finger occupies 159–186 (RNRPHICSFWVKGECKRGEECPYRHEKP). The RRM domain occupies 232-305 (TTLYIGGLGE…RRLNVKWGRS (74 aa)). Disordered stretches follow at residues 304–331 (RSQAARGKGEKDGVTESGIRLEPVPGLP) and 384–425 (HTMD…HGGP). Positions 389–399 (MAPPVPPPMAL) are enriched in pro residues.

This sequence belongs to the SLT11 family. In terms of assembly, component of the pre-catalytic and catalytic spliceosome complexes. Component of the postcatalytic spliceosome P complex.

The protein resides in the nucleus. It is found in the cytoplasm. Required for pre-mRNA splicing as component of the activated spliceosome. Involved in the first step of pre-mRNA splicing. Binds directly to the internal stem-loop (ISL) domain of the U6 snRNA and to the pre-mRNA intron near the 5' splice site during the activation and catalytic phases of the spliceosome cycle. Required for normal early embryogenesis. This chain is Pre-mRNA-splicing factor RBM22 (rbm22), found in Danio rerio (Zebrafish).